A 477-amino-acid chain; its full sequence is MKVNLPAFERAGVMVVGDVMLDRYWYGPTCRISPEAPVPVVKVNTVEERPGGAANVAMNIASLGANVRLVGLTGIDDAARALSKTLAEVNVKCDFVSVPTHPTITKLRVLSRNQQLIRLDFEEGFEGGDPQPLHERINQALGSIGALVLSDYAKGALTSVQTMISLARQAGVPVLIDPKGTDFERYRGATLLTPNLSEFEAVAGKCKSEDELVERGMKLIADYDLSALLVTRSEQGMTLLQPNKAPLHMPTQAQEVYDVTGAGDTVIGVLAATLAAGNTLEEACYFANAAAGVVVGKLGTSTVSPIELENAVRGRADTGFGVMTEEELRQAVASARKRGEKVVMTNGVFDILHAGHVSYLANARKLGDRLIVAVNSDASTKRLKGDSRPVNPLEQRMIVLGALESVDWVVSFEEDTPQRLIAGILPDLLVKGGDYKPEEIAGSEEVWANGGEVMVLNFEDGCSTTNIIKKIQTESEK.

The interval 1 to 318 (MKVNLPAFER…ENAVRGRADT (318 aa)) is ribokinase. ATP is bound at residue 195–198 (NLSE). The active site involves aspartate 264. The interval 344–477 (MTNGVFDILH…IKKIQTESEK (134 aa)) is cytidylyltransferase.

It in the N-terminal section; belongs to the carbohydrate kinase PfkB family. The protein in the C-terminal section; belongs to the cytidylyltransferase family. In terms of assembly, homodimer.

It catalyses the reaction D-glycero-beta-D-manno-heptose 7-phosphate + ATP = D-glycero-beta-D-manno-heptose 1,7-bisphosphate + ADP + H(+). The catalysed reaction is D-glycero-beta-D-manno-heptose 1-phosphate + ATP + H(+) = ADP-D-glycero-beta-D-manno-heptose + diphosphate. It participates in nucleotide-sugar biosynthesis; ADP-L-glycero-beta-D-manno-heptose biosynthesis; ADP-L-glycero-beta-D-manno-heptose from D-glycero-beta-D-manno-heptose 7-phosphate: step 1/4. It functions in the pathway nucleotide-sugar biosynthesis; ADP-L-glycero-beta-D-manno-heptose biosynthesis; ADP-L-glycero-beta-D-manno-heptose from D-glycero-beta-D-manno-heptose 7-phosphate: step 3/4. Catalyzes the phosphorylation of D-glycero-D-manno-heptose 7-phosphate at the C-1 position to selectively form D-glycero-beta-D-manno-heptose-1,7-bisphosphate. Its function is as follows. Catalyzes the ADP transfer from ATP to D-glycero-beta-D-manno-heptose 1-phosphate, yielding ADP-D-glycero-beta-D-manno-heptose. The chain is Bifunctional protein HldE from Salmonella dublin (strain CT_02021853).